The chain runs to 411 residues: Heparan-sulfate 6-O-sulfotransferase 1 (411 aa).

Residues 11–17 (MVERASK) lie on the Cytoplasmic side of the membrane. The chain crosses the membrane as a helical; Signal-anchor for type II membrane protein span at residues 18-37 (FVLVVAGSVCFMLILYQYAG). Over 38 to 411 (PGLSLGAPGG…DYMSHIIEKW (374 aa)) the chain is Lumenal. Residue 93–101 (HIQKTGGTT) participates in 3'-phosphoadenylyl sulfate binding. Substrate-binding positions include 123–124 (KK), R140, W145, and H150. Catalysis depends on H150, which acts as the Proton acceptor. 2 residues coordinate 3'-phosphoadenylyl sulfate: R185 and S193. Positions 197 and 204 each coordinate substrate. A glycan (N-linked (GlcNAc...) asparagine) is linked at N264. 317–319 (MQY) provides a ligand contact to 3'-phosphoadenylyl sulfate. N320 is a glycosylation site (N-linked (GlcNAc...) asparagine). 323–324 (RA) lines the 3'-phosphoadenylyl sulfate pocket. A coiled-coil region spans residues 352–387 (KDLFQQRYQYKRQLERREQRLRSREERLLHRAKEAL).

It belongs to the sulfotransferase 6 family. N-glycosylated. In terms of tissue distribution, expressed in fetal brain.

The protein resides in the membrane. It catalyses the reaction alpha-D-glucosaminyl-[heparan sulfate](n) + 3'-phosphoadenylyl sulfate = 6-sulfo-alpha-D-glucosaminyl-[heparan sulfate](n) + adenosine 3',5'-bisphosphate + H(+). Its function is as follows. 6-O-sulfation enzyme which catalyzes the transfer of sulfate from 3'-phosphoadenosine 5'-phosphosulfate (PAPS) to position 6 of the N-sulfoglucosamine residue (GlcNS) of heparan sulfate. Critical for normal neuronal development where it may play a role in neuron branching. May also play a role in limb development. May prefer iduronic acid. The sequence is that of Heparan-sulfate 6-O-sulfotransferase 1 from Homo sapiens (Human).